The sequence spans 723 residues: Zinc finger CCCH domain-containing protein 11A (723 aa).

3 consecutive C3H1-type zinc fingers follow at residues 2-29 (SKQGDDCYFYFYSTCNKGDNCPFRHCEA), 31-57 (LGNETICTLWKEGRCFRNVCRFRHMEI), and 60-87 (KRSEIPCFWENQPGGCQKSNCAFHHTKG). Disordered regions lie at residues 142-208 (ENSE…KQDD), 223-256 (KKQKEKTKKQSEGPSGVPAHPLQSRTVPVPEKEN), 404-428 (KRAEGERKKQRILPPSVPGKVKLEE), 450-526 (EKAL…VKSL), and 565-681 (VKPS…APLS). A compositionally biased stretch (acidic residues) spans 160–175 (ADDDEDDDDQLSEEGE). Residues 376 to 411 (KTFSEALAERKQRRLEEEKQKLEEFLTEKRAEGERK) are a coiled coil. The segment covering 511–522 (PSNQSAPNSKAQ) has biased composition (polar residues). Low complexity predominate over residues 609-620 (KKAALTAAPALP). The segment covering 637 to 649 (LELQLGSQADSVE) has biased composition (polar residues). The segment covering 650-672 (QSGDSSSASASSQSVAKAQQLSS) has biased composition (low complexity).

The protein localises to the nucleus speckle. In terms of biological role, through its association with TREX complex components, may participate in the export and post-transcriptional coordination of selected mRNA transcripts. Binds RNA. The protein is Zinc finger CCCH domain-containing protein 11A (ZC3H11A) of Gallus gallus (Chicken).